A 208-amino-acid chain; its full sequence is Holliday junction branch migration complex subunit RuvA (208 aa).

A domain I region spans residues 1 to 63 (MIGMLTGRVE…QDAITLHGFL (63 aa)). The tract at residues 64–142 (DRDAKKTFLQ…LSQIEGASAQ (79 aa)) is domain II. The tract at residues 143-151 (AATSKSPVD) is flexible linker. The domain III stretch occupies residues 151–208 (DTGTEQVVEGLISLGWRQQDAQQAVAEACAENDIPTPLATDDVPRVLRLALALMDRGR).

Belongs to the RuvA family. As to quaternary structure, homotetramer. Forms an RuvA(8)-RuvB(12)-Holliday junction (HJ) complex. HJ DNA is sandwiched between 2 RuvA tetramers; dsDNA enters through RuvA and exits via RuvB. An RuvB hexamer assembles on each DNA strand where it exits the tetramer. Each RuvB hexamer is contacted by two RuvA subunits (via domain III) on 2 adjacent RuvB subunits; this complex drives branch migration. In the full resolvosome a probable DNA-RuvA(4)-RuvB(12)-RuvC(2) complex forms which resolves the HJ.

It localises to the cytoplasm. In terms of biological role, the RuvA-RuvB-RuvC complex processes Holliday junction (HJ) DNA during genetic recombination and DNA repair, while the RuvA-RuvB complex plays an important role in the rescue of blocked DNA replication forks via replication fork reversal (RFR). RuvA specifically binds to HJ cruciform DNA, conferring on it an open structure. The RuvB hexamer acts as an ATP-dependent pump, pulling dsDNA into and through the RuvAB complex. HJ branch migration allows RuvC to scan DNA until it finds its consensus sequence, where it cleaves and resolves the cruciform DNA. The sequence is that of Holliday junction branch migration complex subunit RuvA from Bifidobacterium longum (strain DJO10A).